The sequence spans 259 residues: Putative carbamate hydrolase RutD (259 aa).

It belongs to the AB hydrolase superfamily. Hydrolase RutD family.

The catalysed reaction is carbamate + 2 H(+) = NH4(+) + CO2. In terms of biological role, involved in pyrimidine catabolism. May facilitate the hydrolysis of carbamate, a reaction that can also occur spontaneously. This chain is Putative carbamate hydrolase RutD, found in Pseudomonas savastanoi pv. phaseolicola (strain 1448A / Race 6) (Pseudomonas syringae pv. phaseolicola (strain 1448A / Race 6)).